A 972-amino-acid polypeptide reads, in one-letter code: Hemoglobin and hemoglobin-haptoglobin-binding protein (972 aa).

An N-terminal signal peptide occupies residues 1–22 (MKANKLSAITLCILGYAHTVYA). Residues 32–39 (ETIVVSSE) carry the TonB box motif. A TBDR plug domain is found at 38 to 167 (SEDDSVHNKN…LGGTVSFESK (130 aa)). Residues 175–972 (DKNYHFGYKT…NFRVNAEITF (798 aa)) form the TBDR beta-barrel domain. Residues 955-972 (KRFNAPGRNFRVNAEITF) carry the TonB C-terminal box motif.

It belongs to the TonB-dependent receptor family. Hemoglobin/haptoglobin binding protein subfamily.

The protein localises to the cell outer membrane. Functionally, acts as a receptor for hemoglobin or the hemoglobin/haptoglobin complex of the host and is required for heme uptake. May be involved in virulence. The protein is Hemoglobin and hemoglobin-haptoglobin-binding protein of Haemophilus ducreyi (strain 35000HP / ATCC 700724).